Consider the following 176-residue polypeptide: Phosphopantetheine adenylyltransferase (176 aa).

Residue Ser-8 participates in substrate binding. ATP is bound by residues 8–9 (SF) and His-16. 3 residues coordinate substrate: Lys-40, Thr-72, and Arg-86. ATP contacts are provided by residues 87–89 (GLR), Glu-97, and 122–128 (YSFLSSS).

Belongs to the bacterial CoaD family. As to quaternary structure, homohexamer. Requires Mg(2+) as cofactor.

It is found in the cytoplasm. The enzyme catalyses (R)-4'-phosphopantetheine + ATP + H(+) = 3'-dephospho-CoA + diphosphate. It functions in the pathway cofactor biosynthesis; coenzyme A biosynthesis; CoA from (R)-pantothenate: step 4/5. Reversibly transfers an adenylyl group from ATP to 4'-phosphopantetheine, yielding dephospho-CoA (dPCoA) and pyrophosphate. The protein is Phosphopantetheine adenylyltransferase of Acaryochloris marina (strain MBIC 11017).